The sequence spans 276 residues: ARL14 effector protein (276 aa).

Positions 158-177 (KQTEFAPEGGKREKRKLTKA) are disordered. A Glycyl lysine isopeptide (Lys-Gly) (interchain with G-Cter in SUMO2) cross-link involves residue lysine 176. Phosphoserine is present on residues serine 182 and serine 266.

In terms of assembly, interacts with ARL14 and MYO1E.

It is found in the cytoplasm. Through its interaction with ARL14 and MYO1E, may connect MHC class II-containing cytoplasmic vesicles to the actin network and hence controls the movement of these vesicles along the actin cytoskeleton in dendritic cells. This chain is ARL14 effector protein (Arl14ep), found in Mus musculus (Mouse).